A 136-amino-acid chain; its full sequence is Protein PsiE (136 aa).

Helical transmembrane passes span 15-35, 55-75, 82-102, and 108-128; these read ILQNVLNLGLLTLGLILVLFL, YELVEGLVIYFLYFEFIALIV, FHFPLRYFVYIGITAIVRLII, and PMDVLLYSAAILLLVITLWLC.

It belongs to the PsiE family.

The protein localises to the cell inner membrane. The protein is Protein PsiE of Salmonella arizonae (strain ATCC BAA-731 / CDC346-86 / RSK2980).